A 628-amino-acid chain; its full sequence is EF-hand calcium-binding domain-containing protein 7 (628 aa).

Over residues 1 to 22 the composition is skewed to polar residues; it reads MASNPGSDAALGTQNPLLSGSP. The segment at 1 to 24 is disordered; sequence MASNPGSDAALGTQNPLLSGSPRT. 2 EF-hand domains span residues 102–137 and 138–173; these read TSKAELLKSFKKLDVNDDGAILHSDLQKYLTKRGEK and MTQEEVNAVINLADINANGKFDYVKFCKLYMTTSEQ. The interval 192–231 is disordered; it reads QFGSHMEGSPERGPSPAPKPSPRVIRKNDQETFSSKGDTS. Ser200 and Ser212 each carry phosphoserine. The segment covering 222–231 has biased composition (polar residues); the sequence is ETFSSKGDTS. The EF-hand 3 domain occupies 402 to 437; that stretch reads EFRSTLSEIFEVIDLDGNGLISLEEYNFFELRTSGE. Ca(2+) contacts are provided by Asp415, Asp417, Asn419, and Glu426.

Component of the EvC complex composed of EFCAB7, IQCE, EVC2 and EVC; built from two subcomplexes, EVC2:EVC and EFCAB7:IQCE. Interacts (via EF-hand 1 and 2) with IQCE (via N-terminus); this interaction anchors the EVC-EVC2 complex in a signaling microdomain at the base of cilia and stimulates the Hedgehog (Hh) pathway. Interacts with EVC2 (via N-terminal end). Interacts with EVC.

It localises to the cell projection. The protein localises to the cilium membrane. Functionally, component of the EvC complex that positively regulates ciliary Hedgehog (Hh) signaling. Required for the localization of the EVC2:EVC subcomplex at the base of primary cilia. This is EF-hand calcium-binding domain-containing protein 7 (Efcab7) from Mus musculus (Mouse).